The primary structure comprises 213 residues: Uridine kinase (213 aa).

An ATP-binding site is contributed by 13 to 20 (GGSCSGKT).

Belongs to the uridine kinase family.

Its subcellular location is the cytoplasm. It carries out the reaction uridine + ATP = UMP + ADP + H(+). The catalysed reaction is cytidine + ATP = CMP + ADP + H(+). It participates in pyrimidine metabolism; CTP biosynthesis via salvage pathway; CTP from cytidine: step 1/3. Its pathway is pyrimidine metabolism; UMP biosynthesis via salvage pathway; UMP from uridine: step 1/1. The chain is Uridine kinase (udk) from Mycoplasma pneumoniae (strain ATCC 29342 / M129 / Subtype 1) (Mycoplasmoides pneumoniae).